The chain runs to 934 residues: Palmitoyltransferase ZDHHC8 (934 aa).

Topologically, residues Met1 to Arg9 are cytoplasmic. Residues Tyr10–Tyr30 form a helical membrane-spanning segment. Topologically, residues Pro31 to Gly47 are extracellular. The chain crosses the membrane as a helical span at residues Val48 to Ile68. At Pro69–Arg142 the chain is on the cytoplasmic side. The DHHC domain maps to Lys99 to Val149. The S-palmitoyl cysteine intermediate role is filled by Cys129. The chain crosses the membrane as a helical span at residues Phe143–Leu163. At Val164–Ala177 the chain is on the extracellular side. A helical membrane pass occupies residues Pro178 to Leu198. Topologically, residues Thr199–Val934 are cytoplasmic. 6 disordered regions span residues Asn336–Ser440, Met506–Asp525, Gln669–Gly705, Gln751–Gln780, Pro835–Arg862, and Leu881–Val934. 2 stretches are compositionally biased toward polar residues: residues Gly337 to Ser349 and Arg381 to Asp394. Positions Gly397–Asp411 are enriched in gly residues. The segment covering His415–Pro429 has biased composition (basic residues). Composition is skewed to low complexity over residues Gln688–Gly705 and Gln751–Ala765. A compositionally biased stretch (polar residues) spans His768–Gln780. A compositionally biased stretch (polar residues) spans Met910 to Thr919.

Belongs to the DHHC palmitoyltransferase family. ERF2/ZDHHC9 subfamily.

The protein localises to the golgi apparatus membrane. It localises to the cell membrane. It catalyses the reaction L-cysteinyl-[protein] + hexadecanoyl-CoA = S-hexadecanoyl-L-cysteinyl-[protein] + CoA. In terms of biological role, palmitoyltransferase that catalyzes the addition of palmitate onto various protein substrates and therefore functions in several unrelated biological processes. Regulates tissue growth possibly by regulating Ras64B protein stability. May regulate CG34450 mRNA levels. The polypeptide is Palmitoyltransferase ZDHHC8 (Drosophila melanogaster (Fruit fly)).